A 280-amino-acid polypeptide reads, in one-letter code: Bicarbonate transport system permease protein CmpB (280 aa).

Helical transmembrane passes span 32 to 52, 99 to 119, 126 to 146, 153 to 173, 198 to 218, 219 to 239, and 251 to 271; these read PIFGILGFLLLWQLISSAGLI, YSLAAIVGISTGILVGTQPLL, IFQFLRMVAPLAWVPIALVAL, AIFVIFITSVWPILINTTEGV, ILIPSALPYIFTGLRIAIGLA, WLAIIAAEIVMSGIVGIGFFI, and IILAVFYIGAVGLLLDRGIAY. The ABC transmembrane type-1 domain occupies 88–266; the sequence is TLASLGRVAQ…YIGAVGLLLD (179 aa).

This sequence belongs to the binding-protein-dependent transport system permease family. In terms of assembly, the complex is composed of two ATP-binding proteins (CmpC and CmpD), a transmembrane protein (CmpB) and a solute-binding protein (CmpA).

It localises to the cell inner membrane. Part of the ABC transporter complex CmpABCD involved in bicarbonate transport. Probably responsible for the translocation of the substrate across the membrane. This Synechocystis sp. (strain ATCC 27184 / PCC 6803 / Kazusa) protein is Bicarbonate transport system permease protein CmpB (cmpB).